We begin with the raw amino-acid sequence, 645 residues long: Zinc finger and SCAN domain-containing protein 2 (645 aa).

Disordered regions lie at residues 1–25, 37–75, and 193–230; these read MMAA…EEDR, DDSW…GPQG, and EMPE…HGEV. The region spanning 59 to 132 is the SCAN box domain; sequence SAGKGSPQEE…ALVEDLTQTL (74 aa). The span at 199–214 shows a compositional bias: basic and acidic residues; that stretch reads SAQHSDGESDFERDAG. 14 consecutive C2H2-type zinc fingers follow at residues 253–275, 281–303, 309–331, 337–359, 365–387, 393–415, 421–443, 449–471, 477–499, 505–527, 533–555, 561–583, 589–611, and 617–639; these read YECP…ERTH, YKCD…QTTH, YKCR…QRIH, FQCA…QRTH, YSCP…QGIH, YECK…QRIH, YKCT…RRTH, YQCS…RRTH, YKCG…QGMH, YECL…QRIH, YKCS…QQTH, YKCL…QRAH, YRCP…QRIH, and YKCP…QRTH.

Belongs to the krueppel C2H2-type zinc-finger protein family.

It localises to the nucleus. In terms of biological role, may be involved in transcriptional regulation during the post-meiotic stages of spermatogenesis. The polypeptide is Zinc finger and SCAN domain-containing protein 2 (ZSCAN2) (Pongo abelii (Sumatran orangutan)).